Reading from the N-terminus, the 421-residue chain is Gamma-glutamyl phosphate reductase (421 aa).

It belongs to the gamma-glutamyl phosphate reductase family.

It is found in the cytoplasm. It catalyses the reaction L-glutamate 5-semialdehyde + phosphate + NADP(+) = L-glutamyl 5-phosphate + NADPH + H(+). Its pathway is amino-acid biosynthesis; L-proline biosynthesis; L-glutamate 5-semialdehyde from L-glutamate: step 2/2. Its function is as follows. Catalyzes the NADPH-dependent reduction of L-glutamate 5-phosphate into L-glutamate 5-semialdehyde and phosphate. The product spontaneously undergoes cyclization to form 1-pyrroline-5-carboxylate. This is Gamma-glutamyl phosphate reductase from Shewanella pealeana (strain ATCC 700345 / ANG-SQ1).